The chain runs to 1018 residues: D-2-hydroxyglutarate dehydrogenase (1018 aa).

The 234-residue stretch at 48-281 folds into the FAD-binding PCMH-type domain; that stretch reads YQLLPDAVVF…TEARLDITRL (234 aa). (R)-2-hydroxyglutarate-binding residues include Arg402 and His500. The region spanning 662–695 is the 4Fe-4S ferredoxin-type domain; sequence FSHEVKEAMSGCLACKACSTQCPIKIDVPEFRSR. The [4Fe-4S] cluster site is built by Cys673, Cys676, Cys679, and Cys683.

In the N-terminal section; belongs to the FAD-binding oxidoreductase/transferase type 4 family. As to quaternary structure, homotetramer. Requires [4Fe-4S] cluster as cofactor. FAD is required as a cofactor.

It catalyses the reaction (R)-2-hydroxyglutarate + A = 2-oxoglutarate + AH2. Activity is completely inhibited by the addition of 0.5 mM Mn(2+), Ni(2+), or Co(2+) and partially inhibited by 0.5 mM Zn(2+). Functionally, catalyzes the oxidation of D-2-hydroxyglutarate (D-2-HGA) to 2-oxoglutarate. Appears to be the only D2HGDH in E.coli, providing the way to recycle D-2-HGA produced during L-serine synthesis by SerA, by converting it back to 2-oxoglutarate. The physiological molecule that functions as the primary electron acceptor during D-2-HGA oxidation by YdiJ in E.coli is unknown. Shows strict substrate specificity towards D-2-HGA, since it has no detectable activity on L-2-hydroxyglutarate, L-malate, D-malate, L-lactate, D-lactate, L-tartrate, D-tartrate, L-glycerate, D-glycerate, glutarate, or pyruvate. The protein is D-2-hydroxyglutarate dehydrogenase (ydiJ) of Escherichia coli (strain K12).